A 267-amino-acid chain; its full sequence is Pyrroline-5-carboxylate reductase (267 aa).

It belongs to the pyrroline-5-carboxylate reductase family.

It is found in the cytoplasm. It catalyses the reaction L-proline + NADP(+) = (S)-1-pyrroline-5-carboxylate + NADPH + 2 H(+). It carries out the reaction L-proline + NAD(+) = (S)-1-pyrroline-5-carboxylate + NADH + 2 H(+). The protein operates within amino-acid biosynthesis; L-proline biosynthesis; L-proline from L-glutamate 5-semialdehyde: step 1/1. Catalyzes the reduction of 1-pyrroline-5-carboxylate (PCA) to L-proline. This Synechocystis sp. (strain ATCC 27184 / PCC 6803 / Kazusa) protein is Pyrroline-5-carboxylate reductase.